Reading from the N-terminus, the 290-residue chain is Porphobilinogen deaminase (290 aa).

Residue Cys-237 is modified to S-(dipyrrolylmethanemethyl)cysteine.

Belongs to the HMBS family. In terms of assembly, monomer. Dipyrromethane is required as a cofactor.

The catalysed reaction is 4 porphobilinogen + H2O = hydroxymethylbilane + 4 NH4(+). It functions in the pathway porphyrin-containing compound metabolism; protoporphyrin-IX biosynthesis; coproporphyrinogen-III from 5-aminolevulinate: step 2/4. Tetrapolymerization of the monopyrrole PBG into the hydroxymethylbilane pre-uroporphyrinogen in several discrete steps. The chain is Porphobilinogen deaminase from Clostridium botulinum (strain 657 / Type Ba4).